The primary structure comprises 367 residues: MAVANPTTEQAILSEVRKQNRDRRALRFWLGFVLLALFCLVLVGGATRLTNSGLSITEWRPIHGVIPPLSAAEWEEEFRLYQRIPEFQQLNNSMTVDEFKGIFWWEWAHRLIARGIGVIFALPLLYFWLTGRIEKRLRWPLVGILALGGLQGFIGWWMVSSGLSVRTDVSQYRLATHLVMACLIFAGCMWIMRGLSPHSNDPAPARSSRGFAATIAIFALFQIYLGALVAGLDAGFSYNTWPLMDGALIPSDLLIQQPFWINAFENPKTVQFIHRIGAYTLFALTLINMVIALRAAPWTTHARRAVVLFSLVTLQAAIGIATLLMQVPLHWGLLHQAGALVVFGFAIANWRGFYGEYPHATAIAERG.

A run of 5 helical transmembrane segments spans residues 25 to 45 (ALRF…LVGG), 111 to 131 (LIAR…WLTG), 139 to 159 (WPLV…WWMV), 174 to 194 (LATH…IMRG), and 210 to 230 (GFAA…ALVA). His-274 is a binding site for heme. 3 helical membrane-spanning segments follow: residues 276-296 (IGAY…LRAA), 305-325 (AVVL…TLLM), and 327-347 (VPLH…GFAI). His-335 contacts heme.

The protein belongs to the COX15/CtaA family. Type 2 subfamily. In terms of assembly, interacts with CtaB. It depends on heme b as a cofactor.

The protein resides in the cell membrane. It carries out the reaction Fe(II)-heme o + 2 A + H2O = Fe(II)-heme a + 2 AH2. The protein operates within porphyrin-containing compound metabolism; heme A biosynthesis; heme A from heme O: step 1/1. In terms of biological role, catalyzes the conversion of heme O to heme A by two successive hydroxylations of the methyl group at C8. The first hydroxylation forms heme I, the second hydroxylation results in an unstable dihydroxymethyl group, which spontaneously dehydrates, resulting in the formyl group of heme A. In Rhizobium leguminosarum bv. trifolii (strain WSM2304), this protein is Heme A synthase.